The primary structure comprises 401 residues: Argininosuccinate synthase (401 aa).

9-17 (AYSGGLDTS) is an ATP binding site. L-citrulline is bound at residue tyrosine 86. Glycine 116 contacts ATP. Residues threonine 118, asparagine 122, and aspartate 123 each contribute to the L-aspartate site. Asparagine 122 contacts L-citrulline. The L-citrulline site is built by arginine 126, serine 174, serine 183, glutamate 259, and tyrosine 271.

It belongs to the argininosuccinate synthase family. Type 1 subfamily. In terms of assembly, homotetramer.

Its subcellular location is the cytoplasm. The enzyme catalyses L-citrulline + L-aspartate + ATP = 2-(N(omega)-L-arginino)succinate + AMP + diphosphate + H(+). It functions in the pathway amino-acid biosynthesis; L-arginine biosynthesis; L-arginine from L-ornithine and carbamoyl phosphate: step 2/3. This Bacillus cereus (strain Q1) protein is Argininosuccinate synthase.